A 285-amino-acid polypeptide reads, in one-letter code: Xanthoxin dehydrogenase (285 aa).

Position 2 is an N-acetylserine (Ser2).

Belongs to the short-chain dehydrogenases/reductases (SDR) family. As to expression, predominantly in roots and stems, and at lower levels in leaves and seeds.

The protein resides in the cytoplasm. The catalysed reaction is 2-cis,4-trans-xanthoxin + NAD(+) = 2-cis-(+)-abscisic aldehyde + NADH + H(+). It carries out the reaction 2-trans,4-trans-xanthoxin + NAD(+) = 2-trans-(+)-abscisic aldehyde + NADH + H(+). Functionally, involved in the biosynthesis of abscisic acid. Catalyzes the conversion of xanthoxin to abscisic aldehyde. The polypeptide is Xanthoxin dehydrogenase (Arabidopsis thaliana (Mouse-ear cress)).